Reading from the N-terminus, the 397-residue chain is 1-deoxy-D-xylulose 5-phosphate reductoisomerase (397 aa).

The NADPH site is built by Ser-10, Gly-11, Ser-12, Ile-13, Ala-36, Arg-37, and Asn-124. Lys-125 is a binding site for 1-deoxy-D-xylulose 5-phosphate. Position 126 (Glu-126) interacts with NADPH. Asp-150 lines the Mn(2+) pocket. 4 residues coordinate 1-deoxy-D-xylulose 5-phosphate: Ser-151, Glu-152, Ser-186, and His-209. Glu-152 is a Mn(2+) binding site. Gly-215 lines the NADPH pocket. Residues Ser-222, Asn-227, Lys-228, and Glu-231 each contribute to the 1-deoxy-D-xylulose 5-phosphate site. Residue Glu-231 coordinates Mn(2+).

Belongs to the DXR family. The cofactor is Mg(2+). It depends on Mn(2+) as a cofactor.

The catalysed reaction is 2-C-methyl-D-erythritol 4-phosphate + NADP(+) = 1-deoxy-D-xylulose 5-phosphate + NADPH + H(+). Its pathway is isoprenoid biosynthesis; isopentenyl diphosphate biosynthesis via DXP pathway; isopentenyl diphosphate from 1-deoxy-D-xylulose 5-phosphate: step 1/6. In terms of biological role, catalyzes the NADPH-dependent rearrangement and reduction of 1-deoxy-D-xylulose-5-phosphate (DXP) to 2-C-methyl-D-erythritol 4-phosphate (MEP). The polypeptide is 1-deoxy-D-xylulose 5-phosphate reductoisomerase (Aeromonas hydrophila subsp. hydrophila (strain ATCC 7966 / DSM 30187 / BCRC 13018 / CCUG 14551 / JCM 1027 / KCTC 2358 / NCIMB 9240 / NCTC 8049)).